The following is a 292-amino-acid chain: Acetylglutamate kinase (292 aa).

Substrate contacts are provided by residues 64 to 65, R86, and N190; that span reads GG.

This sequence belongs to the acetylglutamate kinase family. ArgB subfamily.

It localises to the cytoplasm. It catalyses the reaction N-acetyl-L-glutamate + ATP = N-acetyl-L-glutamyl 5-phosphate + ADP. It participates in amino-acid biosynthesis; L-arginine biosynthesis; N(2)-acetyl-L-ornithine from L-glutamate: step 2/4. Catalyzes the ATP-dependent phosphorylation of N-acetyl-L-glutamate. The protein is Acetylglutamate kinase of Citrifermentans bemidjiense (strain ATCC BAA-1014 / DSM 16622 / JCM 12645 / Bem) (Geobacter bemidjiensis).